The primary structure comprises 843 residues: Protein P (843 aa).

Residues 1 to 177 (MPLSYQHFRK…FCGSPYSWEQ (177 aa)) form a terminal protein domain (TP) region. The interval 178–346 (ELQHGRLVFQ…YCLSHIVNLL (169 aa)) is spacer. Disordered regions lie at residues 218–243 (LKQSRLGLQPQQGSLARGKSGRSGSI) and 290–316 (STSKRQSSSGHAVELHNIPPSSARSQS). Positions 290–299 (STSKRQSSSG) are enriched in polar residues. The interval 347–690 (EDWGPCTEHG…YLHLYPVARQ (344 aa)) is polymerase/reverse transcriptase domain (RT). A Reverse transcriptase domain is found at 357-600 (EHNIRIPRTP…YSLNFMGYVI (244 aa)). Mg(2+) is bound by residues Asp429, Asp551, and Asp552.

The protein belongs to the hepadnaviridae P protein family.

The enzyme catalyses DNA(n) + a 2'-deoxyribonucleoside 5'-triphosphate = DNA(n+1) + diphosphate. It catalyses the reaction Endonucleolytic cleavage to 5'-phosphomonoester.. With respect to regulation, activated by host HSP70 and HSP40 in vitro to be able to bind the epsilon loop of the pgRNA. Because deletion of the RNase H region renders the protein partly chaperone-independent, the chaperones may be needed indirectly to relieve occlusion of the RNA-binding site by this domain. Inhibited by several reverse-transcriptase inhibitors: Lamivudine, Adefovir and Entecavir. Functionally, multifunctional enzyme that converts the viral RNA genome into dsDNA in viral cytoplasmic capsids. This enzyme displays a DNA polymerase activity that can copy either DNA or RNA templates, and a ribonuclease H (RNase H) activity that cleaves the RNA strand of RNA-DNA heteroduplexes in a partially processive 3'- to 5'-endonucleasic mode. Neo-synthesized pregenomic RNA (pgRNA) are encapsidated together with the P protein, and reverse-transcribed inside the nucleocapsid. Initiation of reverse-transcription occurs first by binding the epsilon loop on the pgRNA genome, and is initiated by protein priming, thereby the 5'-end of (-)DNA is covalently linked to P protein. Partial (+)DNA is synthesized from the (-)DNA template and generates the relaxed circular DNA (RC-DNA) genome. After budding and infection, the RC-DNA migrates in the nucleus, and is converted into a plasmid-like covalently closed circular DNA (cccDNA). The activity of P protein does not seem to be necessary for cccDNA generation, and is presumably released from (+)DNA by host nuclear DNA repair machinery. The sequence is that of Protein P from Homo sapiens (Human).